Here is a 348-residue protein sequence, read N- to C-terminus: Flagellar P-ring protein (348 aa).

An N-terminal signal peptide occupies residues 1 to 24; sequence MRRKNNNKIWIWVATLILSISALY.

Belongs to the FlgI family. As to quaternary structure, the basal body constitutes a major portion of the flagellar organelle and consists of four rings (L,P,S, and M) mounted on a central rod.

The protein localises to the periplasm. It is found in the bacterial flagellum basal body. Assembles around the rod to form the L-ring and probably protects the motor/basal body from shearing forces during rotation. The sequence is that of Flagellar P-ring protein from Helicobacter hepaticus (strain ATCC 51449 / 3B1).